A 226-amino-acid chain; its full sequence is Phosphoglycolate phosphatase (226 aa).

Residue aspartate 10 is the Nucleophile of the active site. The Mg(2+) site is built by aspartate 10, aspartate 12, and aspartate 175.

The protein belongs to the HAD-like hydrolase superfamily. CbbY/CbbZ/Gph/YieH family. Requires Mg(2+) as cofactor.

The catalysed reaction is 2-phosphoglycolate + H2O = glycolate + phosphate. The protein operates within organic acid metabolism; glycolate biosynthesis; glycolate from 2-phosphoglycolate: step 1/1. In terms of biological role, specifically catalyzes the dephosphorylation of 2-phosphoglycolate. Is involved in the dissimilation of the intracellular 2-phosphoglycolate formed during the DNA repair of 3'-phosphoglycolate ends, a major class of DNA lesions induced by oxidative stress. This Vibrio cholerae serotype O1 (strain ATCC 39315 / El Tor Inaba N16961) protein is Phosphoglycolate phosphatase.